The chain runs to 236 residues: Large ribosomal subunit protein uL3 (236 aa).

A disordered region spans residues 215–236 (PAPEPAAPVAAAAAGTGEEASA). Over residues 221 to 236 (APVAAAAAGTGEEASA) the composition is skewed to low complexity.

This sequence belongs to the universal ribosomal protein uL3 family. In terms of assembly, part of the 50S ribosomal subunit. Forms a cluster with proteins L14 and L19.

Functionally, one of the primary rRNA binding proteins, it binds directly near the 3'-end of the 23S rRNA, where it nucleates assembly of the 50S subunit. The sequence is that of Large ribosomal subunit protein uL3 from Parafrankia sp. (strain EAN1pec).